A 560-amino-acid chain; its full sequence is DNA ligase B (560 aa).

The active-site N6-AMP-lysine intermediate is lysine 124.

It belongs to the NAD-dependent DNA ligase family. LigB subfamily.

It carries out the reaction NAD(+) + (deoxyribonucleotide)n-3'-hydroxyl + 5'-phospho-(deoxyribonucleotide)m = (deoxyribonucleotide)n+m + AMP + beta-nicotinamide D-nucleotide.. In terms of biological role, catalyzes the formation of phosphodiester linkages between 5'-phosphoryl and 3'-hydroxyl groups in double-stranded DNA using NAD as a coenzyme and as the energy source for the reaction. The sequence is that of DNA ligase B from Escherichia coli O9:H4 (strain HS).